The sequence spans 371 residues: Flagellar P-ring protein (371 aa).

Positions 1–25 (MKMRACKWLLTLAVAFAATLSSAYA) are cleaved as a signal peptide.

The protein belongs to the FlgI family. The basal body constitutes a major portion of the flagellar organelle and consists of four rings (L,P,S, and M) mounted on a central rod.

The protein localises to the periplasm. It is found in the bacterial flagellum basal body. Its function is as follows. Assembles around the rod to form the L-ring and probably protects the motor/basal body from shearing forces during rotation. This Sinorhizobium medicae (strain WSM419) (Ensifer medicae) protein is Flagellar P-ring protein.